A 360-amino-acid chain; its full sequence is Phosphoserine aminotransferase (360 aa).

R41 serves as a coordination point for L-glutamate. Residues W101, T152, D172, and Q195 each contribute to the pyridoxal 5'-phosphate site. K196 bears the N6-(pyridoxal phosphate)lysine mark. 237-238 (NT) lines the pyridoxal 5'-phosphate pocket.

Belongs to the class-V pyridoxal-phosphate-dependent aminotransferase family. SerC subfamily. Homodimer. It depends on pyridoxal 5'-phosphate as a cofactor.

Its subcellular location is the cytoplasm. It catalyses the reaction O-phospho-L-serine + 2-oxoglutarate = 3-phosphooxypyruvate + L-glutamate. The catalysed reaction is 4-(phosphooxy)-L-threonine + 2-oxoglutarate = (R)-3-hydroxy-2-oxo-4-phosphooxybutanoate + L-glutamate. Its pathway is amino-acid biosynthesis; L-serine biosynthesis; L-serine from 3-phospho-D-glycerate: step 2/3. It functions in the pathway cofactor biosynthesis; pyridoxine 5'-phosphate biosynthesis; pyridoxine 5'-phosphate from D-erythrose 4-phosphate: step 3/5. Catalyzes the reversible conversion of 3-phosphohydroxypyruvate to phosphoserine and of 3-hydroxy-2-oxo-4-phosphonooxybutanoate to phosphohydroxythreonine. This is Phosphoserine aminotransferase from Burkholderia ambifaria (strain MC40-6).